Here is a 58-residue protein sequence, read N- to C-terminus: AFAGVLADADIKAALAGCAAAESFNYKTFFKFFAIIDQDHSGFIEEEELKALSDAETK.

N-acetylalanine is present on Ala1. Residues 24–58 enclose the EF-hand domain; sequence FNYKTFFKFFAIIDQDHSGFIEEEELKALSDAETK. Residues Asp37, Asp39, Ser41, Phe43, Glu45, and Glu48 each coordinate Ca(2+).

Belongs to the parvalbumin family.

In terms of biological role, in muscle, parvalbumin is thought to be involved in relaxation after contraction. It binds two calcium ions. The protein is Parvalbumin beta 3 of Merluccius senegalensis (Senegalese hake).